Reading from the N-terminus, the 253-residue chain is 5'-nucleotidase SurE (253 aa).

A divalent metal cation contacts are provided by aspartate 8, aspartate 9, serine 39, and asparagine 95.

Belongs to the SurE nucleotidase family. Requires a divalent metal cation as cofactor.

The protein resides in the cytoplasm. The catalysed reaction is a ribonucleoside 5'-phosphate + H2O = a ribonucleoside + phosphate. Functionally, nucleotidase that shows phosphatase activity on nucleoside 5'-monophosphates. This Clostridium beijerinckii (strain ATCC 51743 / NCIMB 8052) (Clostridium acetobutylicum) protein is 5'-nucleotidase SurE.